The chain runs to 626 residues: Chaperone protein HtpG (626 aa).

The tract at residues 1–341 (METKQFKAES…SEDLSLNISR (341 aa)) is a; substrate-binding. Residues 342 to 552 (EMLQHDRQLK…EGEISIEMEK (211 aa)) are b. The segment at 553-626 (ILSAMPNNEN…FSNSICKLMI (74 aa)) is c.

It belongs to the heat shock protein 90 family. In terms of assembly, homodimer.

The protein resides in the cytoplasm. In terms of biological role, molecular chaperone. Has ATPase activity. The protein is Chaperone protein HtpG of Alkaliphilus oremlandii (strain OhILAs) (Clostridium oremlandii (strain OhILAs)).